The primary structure comprises 651 residues: Acetyl-coenzyme A synthetase (651 aa).

CoA-binding positions include 189-192 (RGGK), threonine 311, and asparagine 335. ATP contacts are provided by residues 387–389 (GEP), 411–416 (DTWWQT), aspartate 500, and arginine 515. Serine 523 is a CoA binding site. Arginine 526 contributes to the ATP binding site. The Mg(2+) site is built by valine 537, histidine 539, and valine 542. Arginine 586 lines the CoA pocket. N6-acetyllysine is present on lysine 611.

It belongs to the ATP-dependent AMP-binding enzyme family. Mg(2+) serves as cofactor. Post-translationally, acetylated. Deacetylation by the SIR2-homolog deacetylase activates the enzyme.

The catalysed reaction is acetate + ATP + CoA = acetyl-CoA + AMP + diphosphate. Catalyzes the conversion of acetate into acetyl-CoA (AcCoA), an essential intermediate at the junction of anabolic and catabolic pathways. AcsA undergoes a two-step reaction. In the first half reaction, AcsA combines acetate with ATP to form acetyl-adenylate (AcAMP) intermediate. In the second half reaction, it can then transfer the acetyl group from AcAMP to the sulfhydryl group of CoA, forming the product AcCoA. The sequence is that of Acetyl-coenzyme A synthetase from Brucella anthropi (strain ATCC 49188 / DSM 6882 / CCUG 24695 / JCM 21032 / LMG 3331 / NBRC 15819 / NCTC 12168 / Alc 37) (Ochrobactrum anthropi).